The sequence spans 160 residues: MKWVPLSNLHVDVPKDVTRPTITTSDEPDTLYKRLSILVKAHDRAVLDSYEYFAVLAAKELGISIKVHEPPRKIERFTLLKSVHIFKKHRVQYEMRTLYRCLELKHLTGSTASVYLEYIQRNLPEGVAMEVTKTQIQQLPEHIKEPMWETVPEEKKESKS.

Belongs to the universal ribosomal protein uS10 family. Component of the mitochondrial ribosome small subunit (28S) which comprises a 12S rRNA and about 30 distinct proteins.

The protein resides in the mitochondrion. The polypeptide is Small ribosomal subunit protein uS10m (Mrps10) (Mus musculus (Mouse)).